The following is a 240-amino-acid chain: 2,3,4,5-tetrahydropyridine-2,6-dicarboxylate N-acetyltransferase (240 aa).

Belongs to the transferase hexapeptide repeat family. DapH subfamily.

It carries out the reaction (S)-2,3,4,5-tetrahydrodipicolinate + acetyl-CoA + H2O = L-2-acetamido-6-oxoheptanedioate + CoA. It functions in the pathway amino-acid biosynthesis; L-lysine biosynthesis via DAP pathway; LL-2,6-diaminopimelate from (S)-tetrahydrodipicolinate (acetylase route): step 1/3. Its function is as follows. Catalyzes the transfer of an acetyl group from acetyl-CoA to tetrahydrodipicolinate. The polypeptide is 2,3,4,5-tetrahydropyridine-2,6-dicarboxylate N-acetyltransferase (Bacillus mycoides (strain KBAB4) (Bacillus weihenstephanensis)).